Here is a 680-residue protein sequence, read N- to C-terminus: Glutamine-dependent NAD(+) synthetase (680 aa).

Residues 12–276 (VRVAACTHHA…EHRSVADVDT (265 aa)) form the CN hydrolase domain. Glutamate 52 acts as the Proton acceptor; for glutaminase activity in catalysis. Lysine 121 functions as the For glutaminase activity in the catalytic mechanism. Tyrosine 127 contributes to the L-glutamine binding site. The active-site Nucleophile; for glutaminase activity is the cysteine 176. Serine 203 and arginine 209 together coordinate L-glutamine. 366–373 (GVSGGLDS) is a binding site for ATP. Asparagine 456 serves as a coordination point for deamido-NAD(+). An ATP-binding site is contributed by threonine 480. Residues glutamate 485, 490–493 (WSTY), and lysine 636 contribute to the deamido-NAD(+) site.

This sequence in the C-terminal section; belongs to the NAD synthetase family.

The catalysed reaction is deamido-NAD(+) + L-glutamine + ATP + H2O = L-glutamate + AMP + diphosphate + NAD(+) + H(+). It functions in the pathway cofactor biosynthesis; NAD(+) biosynthesis; NAD(+) from deamido-NAD(+) (L-Gln route): step 1/1. Its function is as follows. Catalyzes the ATP-dependent amidation of deamido-NAD to form NAD. Uses L-glutamine as a nitrogen source. The protein is Glutamine-dependent NAD(+) synthetase of Mycobacterium leprae (strain TN).